The sequence spans 299 residues: Ornithine carbamoyltransferase (299 aa).

Carbamoyl phosphate contacts are provided by residues 52–55 (STRT), Gln-79, Arg-103, and 130–133 (HPCQ). L-ornithine-binding positions include Asn-161, Asp-218, and 222-223 (SM). Carbamoyl phosphate-binding positions include 258-259 (CL) and Arg-286.

It belongs to the aspartate/ornithine carbamoyltransferase superfamily. OTCase family.

Its subcellular location is the cytoplasm. It carries out the reaction carbamoyl phosphate + L-ornithine = L-citrulline + phosphate + H(+). Its pathway is amino-acid biosynthesis; L-arginine biosynthesis; L-arginine from L-ornithine and carbamoyl phosphate: step 1/3. Functionally, reversibly catalyzes the transfer of the carbamoyl group from carbamoyl phosphate (CP) to the N(epsilon) atom of ornithine (ORN) to produce L-citrulline. The sequence is that of Ornithine carbamoyltransferase from Ruthia magnifica subsp. Calyptogena magnifica.